A 261-amino-acid chain; its full sequence is Triosephosphate isomerase (261 aa).

10–12 serves as a coordination point for substrate; it reads NWK. H100 functions as the Electrophile in the catalytic mechanism. The Proton acceptor role is filled by E172. Residues G178, S218, and 239-240 contribute to the substrate site; that span reads GG.

The protein belongs to the triosephosphate isomerase family. In terms of assembly, homodimer.

The protein resides in the cytoplasm. The catalysed reaction is D-glyceraldehyde 3-phosphate = dihydroxyacetone phosphate. The protein operates within carbohydrate biosynthesis; gluconeogenesis. It functions in the pathway carbohydrate degradation; glycolysis; D-glyceraldehyde 3-phosphate from glycerone phosphate: step 1/1. Functionally, involved in the gluconeogenesis. Catalyzes stereospecifically the conversion of dihydroxyacetone phosphate (DHAP) to D-glyceraldehyde-3-phosphate (G3P). This Rhodococcus jostii (strain RHA1) protein is Triosephosphate isomerase.